Consider the following 296-residue polypeptide: 4-hydroxy-tetrahydrodipicolinate synthase (296 aa).

Thr-47 lines the pyruvate pocket. Tyr-135 acts as the Proton donor/acceptor in catalysis. Lys-164 functions as the Schiff-base intermediate with substrate in the catalytic mechanism. Ile-207 provides a ligand contact to pyruvate.

This sequence belongs to the DapA family. In terms of assembly, homotetramer; dimer of dimers.

It localises to the cytoplasm. The catalysed reaction is L-aspartate 4-semialdehyde + pyruvate = (2S,4S)-4-hydroxy-2,3,4,5-tetrahydrodipicolinate + H2O + H(+). The protein operates within amino-acid biosynthesis; L-lysine biosynthesis via DAP pathway; (S)-tetrahydrodipicolinate from L-aspartate: step 3/4. Functionally, catalyzes the condensation of (S)-aspartate-beta-semialdehyde [(S)-ASA] and pyruvate to 4-hydroxy-tetrahydrodipicolinate (HTPA). The protein is 4-hydroxy-tetrahydrodipicolinate synthase of Karelsulcia muelleri (strain GWSS) (Sulcia muelleri).